The following is a 119-amino-acid chain: UPF0102 protein Sare_1228 (119 aa).

It belongs to the UPF0102 family.

This is UPF0102 protein Sare_1228 from Salinispora arenicola (strain CNS-205).